We begin with the raw amino-acid sequence, 130 residues long: Arsenical-resistance protein 2 (130 aa).

Residues 17–124 (QRKDFQVVDL…WETHCRESNL (108 aa)) form the Rhodanese domain.

Its function is as follows. Involved in resistance to arsenic compounds. The protein is Arsenical-resistance protein 2 (ARR2) of Saccharomyces cerevisiae (strain ATCC 204508 / S288c) (Baker's yeast).